The sequence spans 164 residues: Transcription elongation factor GreA (164 aa).

A coiled-coil region spans residues 50-76 (YHAAREEQGQQEARIRQLQELLNNAKV).

It belongs to the GreA/GreB family.

Its function is as follows. Necessary for efficient RNA polymerase transcription elongation past template-encoded arresting sites. The arresting sites in DNA have the property of trapping a certain fraction of elongating RNA polymerases that pass through, resulting in locked ternary complexes. Cleavage of the nascent transcript by cleavage factors such as GreA or GreB allows the resumption of elongation from the new 3'terminus. GreA releases sequences of 2 to 3 nucleotides. In Mycobacteroides abscessus (strain ATCC 19977 / DSM 44196 / CCUG 20993 / CIP 104536 / JCM 13569 / NCTC 13031 / TMC 1543 / L948) (Mycobacterium abscessus), this protein is Transcription elongation factor GreA.